The chain runs to 128 residues: UPF0325 protein YaeH (128 aa).

The protein belongs to the UPF0325 family.

The chain is UPF0325 protein YaeH from Salmonella agona (strain SL483).